The chain runs to 492 residues: MNRIRIHVLPTNRGRITPVPRSQEPLSCAFTHRPCSHPRLEGQEFCIKHILEDKNAPFKQCSYISTKNGKRCPNAAPKPEKKDGVSFCAEHVRRNALALHAQMKKTNPGPVGETLLCQLSSYAKTELGSQTPESSRSEASRILDEDSWSDGEQEPITVDQTWRGDPDSEADSIDSDQEDPLKHAGVYTAEEVALIMREKLIRLQSLYIDQFKRLQHLLKEKKRRYLHNRKVEHEALGSSLLTGPEGLLAKERENLKRLKCLRRYRQRYGVEALLHRQLKERRMLATDGAAQQAHTTRSSQRCLAFVDDVRCSNQSLPMTRHCLTHICQDTNQVLFKCCQGSEEVPCNKPVPVSLSEDPCCPLHFQLPPQMYKPEQVLSVPDDLEAGPMDLYLSAAELQPTESLPLEFSDDLDVVGDGMQCPPSPLLFDPSLTLEDHLVKEIAEDPVDILGQMQMAGDGCRSQGSRNSEKASAPLSQSGLATANGKPEPTSIS.

Lys-78 participates in a covalent cross-link: Glycyl lysine isopeptide (Lys-Gly) (interchain with G-Cter in SUMO2). The tract at residues 126–182 is disordered; the sequence is ELGSQTPESSRSEASRILDEDSWSDGEQEPITVDQTWRGDPDSEADSIDSDQEDPLK. Thr-131 bears the Phosphothreonine mark. A compositionally biased stretch (basic and acidic residues) spans 135-144; it reads SRSEASRILD. Phosphoserine is present on residues Ser-147, Ser-149, Ser-168, Ser-172, and Ser-175. The segment covering 167-178 has biased composition (acidic residues); sequence DSEADSIDSDQE. The interval 308 to 364 is required for interaction with other NSL complex members; it reads DVRCSNQSLPMTRHCLTHICQDTNQVLFKCCQGSEEVPCNKPVPVSLSEDPCCPLHF. Positions 455–492 are disordered; the sequence is AGDGCRSQGSRNSEKASAPLSQSGLATANGKPEPTSIS.

Component of the NSL complex at least composed of KAT8/MOF, KANSL1, KANSL2, KANSL3, MCRS1, PHF20, OGT1/OGT, WDR5 and HCFC1.

Its subcellular location is the nucleus. The protein localises to the mitochondrion. In terms of biological role, non-catalytic component of the NSL histone acetyltransferase complex, a multiprotein complex that mediates histone H4 acetylation at 'Lys-5'- and 'Lys-8' (H4K5ac and H4K8ac) at transcription start sites and promotes transcription initiation. Required for NSL complex stability and for transcription of intraciliary transport genes in both ciliated and non-ciliated cells by regulating histone H4 acetylation at 'Lys-5'- and 'Lys-12' (H4K5ac and H4K12ac). This is necessary for cilium assembly in ciliated cells and for organization of the microtubule cytoskeleton in non-ciliated cells. Required within the NSL complex to maintain nuclear architecture stability by promoting KAT8-mediated acetylation of lamin LMNA. The protein is KAT8 regulatory NSL complex subunit 2 (KANSL2) of Homo sapiens (Human).